The chain runs to 147 residues: Hemoglobin subunit rho (147 aa).

Residues 3–147 (HWSAEEKQLI…VAHALAYKYH (145 aa)) form the Globin domain. 2 residues coordinate heme b: H64 and H93.

It belongs to the globin family.

In terms of biological role, the rho chain is the major early embryonic beta-type hemoglobin chain. This Gallus gallus (Chicken) protein is Hemoglobin subunit rho.